Reading from the N-terminus, the 336-residue chain is Phenylalanine--tRNA ligase alpha subunit (336 aa).

Mg(2+) is bound at residue E259.

It belongs to the class-II aminoacyl-tRNA synthetase family. Phe-tRNA synthetase alpha subunit type 1 subfamily. In terms of assembly, tetramer of two alpha and two beta subunits. Mg(2+) serves as cofactor.

The protein localises to the cytoplasm. It carries out the reaction tRNA(Phe) + L-phenylalanine + ATP = L-phenylalanyl-tRNA(Phe) + AMP + diphosphate + H(+). The sequence is that of Phenylalanine--tRNA ligase alpha subunit from Tropheryma whipplei (strain Twist) (Whipple's bacillus).